Consider the following 267-residue polypeptide: C-type lectin domain family 12 member A (267 aa).

The Cytoplasmic segment spans residues 1 to 43 (MSEEIVYANLKIQDPDKKEETQKSDKCGGKVSADASHSQQKTV). Residues 5–10 (IVYANL) carry the ITIM motif motif. Tyr-7 is subject to Phosphotyrosine. A helical; Signal-anchor for type II membrane protein membrane pass occupies residues 44 to 64 (LILILLCLLLFIGMGVLGGIF). The Extracellular segment spans residues 65–267 (YTTLATEMIK…VLNGLPEDSR (203 aa)). N-linked (GlcNAc...) asparagine glycans are attached at residues Asn-98 and Asn-105. 4 disulfide bridges follow: Cys-118–Cys-130, Cys-133–Cys-144, Cys-161–Cys-246, and Cys-225–Cys-238. The region spanning 140-247 (YKDSCYSQLN…CTDENNIICE (108 aa)) is the C-type lectin domain. N-linked (GlcNAc...) asparagine glycosylation occurs at Asn-165.

As to quaternary structure, homodimer; disulfide-linked. Interacts (when the ITIM motif is phosphorylated) with PTPN6 and PTPN11. Phosphorylated at Tyr-7 by SRC in the ITIM motif following ligand-binding, promoting recruitment of tyrosine-protein phosphatases PTPN6 and PTPN11. As to expression, mainly expressed in lymphoid tissues. Preferentially expressed in peripheral blood leukocytes; less frequent in thymus, spleen, heart, brain and lung; and undetectable in other tissues.

The protein localises to the cell membrane. Myeloid inhibitory C-type lectin receptor that acts as a negative regulator of myeloid cell activation. Myeloid cell inhibition is required to limit proinflammatory pathways and protect against excessive inflammation. Specifically recognizes and binds various structures, such as neutrophil extracellular traps (NETs) or monosodium urate crystals. Also acts as a pattern-recognition receptor for pathogen-associated molecules, such as plasmodium hemozoin or mycobacterial micolic acid. Ligand-binding induces phosphorylation of its ITIM motif, followed by recruitment of tyrosine-protein phosphatases PTPN6 and PTPN11, which counteract tyrosine-protein kinase SYK, thereby preventing myeloid cell activation. Acts as a pattern-recognition receptor for NETs in neutrophils: specifically recognizes DNA in NETs, leading to inhibit neutrophil activation and limit further NET formation. This regulation is essential for controlling key neutrophil responses and limit NET-mediated inflammatory conditions. Also recognizes dead cells by acting as a receptor for monosodium urate crystals, leading to down-regulate neutrophil activation. Binding to monosodium urate crystals also promotes the type I interferon response. Acts as an inhibitor of natural killer (NK) cell cytotoxicity. Also acts as an ihibitor of dendritic cell maturation in an IL10-dependent manner. This is C-type lectin domain family 12 member A from Mus musculus (Mouse).